The following is a 60-amino-acid chain: DNA gyrase inhibitor YacG (60 aa).

Residues cysteine 3, cysteine 6, cysteine 18, and cysteine 22 each coordinate Zn(2+). The segment at 38–60 (PASSEDEEEPLDQEAETPVAPRH) is disordered. Residues 41–52 (SEDEEEPLDQEA) show a composition bias toward acidic residues.

It belongs to the DNA gyrase inhibitor YacG family. As to quaternary structure, interacts with GyrB. Requires Zn(2+) as cofactor.

Inhibits all the catalytic activities of DNA gyrase by preventing its interaction with DNA. Acts by binding directly to the C-terminal domain of GyrB, which probably disrupts DNA binding by the gyrase. This Ruegeria pomeroyi (strain ATCC 700808 / DSM 15171 / DSS-3) (Silicibacter pomeroyi) protein is DNA gyrase inhibitor YacG.